Here is a 264-residue protein sequence, read N- to C-terminus: 3-methyl-2-oxobutanoate hydroxymethyltransferase (264 aa).

Mg(2+)-binding residues include Asp-45 and Asp-84. 3-methyl-2-oxobutanoate-binding positions include 45-46 (DS), Asp-84, and Lys-112. Residue Glu-114 participates in Mg(2+) binding. Glu-181 functions as the Proton acceptor in the catalytic mechanism.

The protein belongs to the PanB family. In terms of assembly, homodecamer; pentamer of dimers. Requires Mg(2+) as cofactor.

It localises to the cytoplasm. It carries out the reaction 3-methyl-2-oxobutanoate + (6R)-5,10-methylene-5,6,7,8-tetrahydrofolate + H2O = 2-dehydropantoate + (6S)-5,6,7,8-tetrahydrofolate. The protein operates within cofactor biosynthesis; (R)-pantothenate biosynthesis; (R)-pantoate from 3-methyl-2-oxobutanoate: step 1/2. Catalyzes the reversible reaction in which hydroxymethyl group from 5,10-methylenetetrahydrofolate is transferred onto alpha-ketoisovalerate to form ketopantoate. This chain is 3-methyl-2-oxobutanoate hydroxymethyltransferase, found in Erwinia tasmaniensis (strain DSM 17950 / CFBP 7177 / CIP 109463 / NCPPB 4357 / Et1/99).